Here is a 152-residue protein sequence, read N- to C-terminus: Small ribosomal subunit protein uS15 (152 aa).

It belongs to the universal ribosomal protein uS15 family. In terms of assembly, part of the 30S ribosomal subunit.

The polypeptide is Small ribosomal subunit protein uS15 (Methanospirillum hungatei JF-1 (strain ATCC 27890 / DSM 864 / NBRC 100397 / JF-1)).